Consider the following 353-residue polypeptide: Lipase chaperone (353 aa).

Residues 12-32 (IVLYLILGCVVVCGVWYSFDV) traverse the membrane as a helical segment.

It belongs to the lipase chaperone family.

The protein localises to the cell inner membrane. In terms of biological role, may be involved in the folding of the extracellular lipase during its passage through the periplasm. In Xylella fastidiosa (strain M23), this protein is Lipase chaperone.